Consider the following 250-residue polypeptide: Phosphoribosylaminoimidazole-succinocarboxamide synthase (250 aa).

It belongs to the SAICAR synthetase family.

It carries out the reaction 5-amino-1-(5-phospho-D-ribosyl)imidazole-4-carboxylate + L-aspartate + ATP = (2S)-2-[5-amino-1-(5-phospho-beta-D-ribosyl)imidazole-4-carboxamido]succinate + ADP + phosphate + 2 H(+). Its pathway is purine metabolism; IMP biosynthesis via de novo pathway; 5-amino-1-(5-phospho-D-ribosyl)imidazole-4-carboxamide from 5-amino-1-(5-phospho-D-ribosyl)imidazole-4-carboxylate: step 1/2. This Bifidobacterium longum subsp. infantis (strain ATCC 15697 / DSM 20088 / JCM 1222 / NCTC 11817 / S12) protein is Phosphoribosylaminoimidazole-succinocarboxamide synthase.